The following is a 504-amino-acid chain: UDP-N-acetylmuramoylalanine--D-glutamate ligase (504 aa).

129-135 (GTNGKTT) is a binding site for ATP.

Belongs to the MurCDEF family.

The protein localises to the cytoplasm. The catalysed reaction is UDP-N-acetyl-alpha-D-muramoyl-L-alanine + D-glutamate + ATP = UDP-N-acetyl-alpha-D-muramoyl-L-alanyl-D-glutamate + ADP + phosphate + H(+). It functions in the pathway cell wall biogenesis; peptidoglycan biosynthesis. In terms of biological role, cell wall formation. Catalyzes the addition of glutamate to the nucleotide precursor UDP-N-acetylmuramoyl-L-alanine (UMA). This Burkholderia pseudomallei (strain 668) protein is UDP-N-acetylmuramoylalanine--D-glutamate ligase.